A 32-amino-acid polypeptide reads, in one-letter code: LVDTFPGQSIDFFGALREGPPTFEQPAMTIEK.

A disordered region spans residues 13-32 (FGALREGPPTFEQPAMTIEK).

Belongs to the RuBisCO activase family.

It is found in the plastid. The protein localises to the chloroplast stroma. Activation of RuBisCO (ribulose-1,5-bisphosphate carboxylase/oxygenase; EC 4.1.1.39) involves the ATP-dependent carboxylation of the epsilon-amino group of lysine leading to a carbamate structure. The polypeptide is Ribulose bisphosphate carboxylase/oxygenase activase, chloroplastic (Populus euphratica (Euphrates poplar)).